We begin with the raw amino-acid sequence, 168 residues long: uncharacterized protein (168 aa).

Residues 1–52 are disordered; sequence MVLGLASFPESLSSQSETATQPRRPSVKWDLGSDYRKGTEETTASGSNFRRE. The segment covering 10–23 has biased composition (polar residues); it reads ESLSSQSETATQPR. Over residues 31-40 the composition is skewed to basic and acidic residues; it reads LGSDYRKGTE.

This is an uncharacterized protein from Mus musculus (Mouse).